The primary structure comprises 160 residues: Single-stranded DNA-binding protein 2 (160 aa).

The SSB domain maps to 2–104; sequence MNRVVLVGRL…VVAESVQFLE (103 aa). The segment at 107–160 is disordered; it reads NNNVEGATSNNYQNKANYSNNNQTSSYRADTSQKSDSFASEGKPIDINEDDLPF. The segment covering 115-129 has biased composition (low complexity); the sequence is SNNYQNKANYSNNNQ. A compositionally biased stretch (polar residues) spans 130 to 144; that stretch reads TSSYRADTSQKSDSF. The Important for interaction with partner proteins signature appears at 155 to 160; that stretch reads EDDLPF.

Homotetramer.

Plays an important role in DNA replication, recombination and repair. Binds to ssDNA and to an array of partner proteins to recruit them to their sites of action during DNA metabolism. This chain is Single-stranded DNA-binding protein 2 (ssb2), found in Listeria monocytogenes serovar 1/2a (strain ATCC BAA-679 / EGD-e).